A 693-amino-acid polypeptide reads, in one-letter code: Putative adenosylcobalamin-dependent ribonucleoside-triphosphate reductase (693 aa).

A disulfide bridge connects residues Cys90 and Cys386. Residues Cys375 and Glu377 contribute to the active site.

Belongs to the class II ribonucleoside-triphosphate reductase family. Requires adenosylcob(III)alamin as cofactor.

The catalysed reaction is a 2'-deoxyribonucleoside 5'-triphosphate + [thioredoxin]-disulfide + H2O = a ribonucleoside 5'-triphosphate + [thioredoxin]-dithiol. This chain is Putative adenosylcobalamin-dependent ribonucleoside-triphosphate reductase (50), found in Mycobacterium phage D29 (Mycobacteriophage D29).